A 619-amino-acid chain; its full sequence is 2-isopropylmalate synthase (619 aa).

The Pyruvate carboxyltransferase domain maps to 61–336; that stretch reads PRWLSTDLRD…SPNLDFSDLT (276 aa). Positions 70, 275, 277, and 311 each coordinate a divalent metal cation.

This sequence belongs to the alpha-IPM synthase/homocitrate synthase family. LeuA type 2 subfamily. As to quaternary structure, homodimer. Requires a divalent metal cation as cofactor.

The protein localises to the cytoplasm. Its subcellular location is the mitochondrion. It carries out the reaction 3-methyl-2-oxobutanoate + acetyl-CoA + H2O = (2S)-2-isopropylmalate + CoA + H(+). It functions in the pathway amino-acid biosynthesis; L-leucine biosynthesis; L-leucine from 3-methyl-2-oxobutanoate: step 1/4. In terms of biological role, catalyzes the condensation of the acetyl group of acetyl-CoA with 3-methyl-2-oxobutanoate (2-oxoisovalerate) to form 3-carboxy-3-hydroxy-4-methylpentanoate (2-isopropylmalate). The chain is 2-isopropylmalate synthase (LEU4) from Saccharomyces cerevisiae (strain ATCC 204508 / S288c) (Baker's yeast).